The sequence spans 151 residues: Probable cyclic pyranopterin monophosphate synthase (151 aa).

Residues 66–68 and 102–103 each bind substrate; these read MCH and ME. Asp-117 is an active-site residue.

This sequence belongs to the MoaC family. In terms of assembly, homohexamer; trimer of dimers.

The catalysed reaction is (8S)-3',8-cyclo-7,8-dihydroguanosine 5'-triphosphate = cyclic pyranopterin phosphate + diphosphate. The protein operates within cofactor biosynthesis; molybdopterin biosynthesis. Catalyzes the conversion of (8S)-3',8-cyclo-7,8-dihydroguanosine 5'-triphosphate to cyclic pyranopterin monophosphate (cPMP). The polypeptide is Probable cyclic pyranopterin monophosphate synthase (Sulfurisphaera tokodaii (strain DSM 16993 / JCM 10545 / NBRC 100140 / 7) (Sulfolobus tokodaii)).